Here is a 149-residue protein sequence, read N- to C-terminus: uncharacterized protein (149 aa).

Over residues 130–144 (ESNVTKENIEIKEEK) the composition is skewed to basic and acidic residues. Residues 130-149 (ESNVTKENIEIKEEKEENSE) are disordered.

This is an uncharacterized protein from Methanocaldococcus jannaschii (strain ATCC 43067 / DSM 2661 / JAL-1 / JCM 10045 / NBRC 100440) (Methanococcus jannaschii).